The following is a 218-amino-acid chain: Adenylate kinase (218 aa).

An ATP-binding site is contributed by 10–15 (GAGKGT). An NMP region spans residues 30-59 (STGDMLRAAVKQGTPLGQEAKKVMDAGGLV). AMP is bound by residues threonine 31, arginine 36, 57 to 59 (GLV), 85 to 88 (GFPR), and glutamine 92. The LID stretch occupies residues 122–159 (GRRVHPASGRSYHVRFNPPKQEGLDDVTGEPLVQRDDD). Residues arginine 123 and 132-133 (SY) contribute to the ATP site. AMP is bound by residues arginine 156 and arginine 167. Position 203 (glycine 203) interacts with ATP.

Belongs to the adenylate kinase family. Monomer.

It localises to the cytoplasm. The catalysed reaction is AMP + ATP = 2 ADP. The protein operates within purine metabolism; AMP biosynthesis via salvage pathway; AMP from ADP: step 1/1. In terms of biological role, catalyzes the reversible transfer of the terminal phosphate group between ATP and AMP. Plays an important role in cellular energy homeostasis and in adenine nucleotide metabolism. The sequence is that of Adenylate kinase from Bordetella petrii (strain ATCC BAA-461 / DSM 12804 / CCUG 43448).